The primary structure comprises 239 residues: Regulator protein TubY (239 aa).

The segment at 138-239 (INNTISQQLS…KGFFGKLFKR (102 aa)) is required to bind TubZ. The stretch at 150 to 229 (LNAHNEALEQ…KQQNEEQNNK (80 aa)) forms a coiled coil. A compositionally biased stretch (basic and acidic residues) spans 217–228 (EERKQQNEEQNN). The interval 217–239 (EERKQQNEEQNNKKGFFGKLFKR) is disordered. Low complexity predominate over residues 229-239 (KKGFFGKLFKR).

As to quaternary structure, forms homooctamers in the absence of the last 13 residues; the coiled coil domain is required for oligomerization. In the presence of GTP and Mg(2+) binds to TubZ and also to TubZ-TubR-tubC DNA; the latter is reshaped from large filament bundles to rings of 30-40 nm diameter.

It localises to the host cytoplasm. A probable TubZ filament regulator that is part of the type III partition system presumably used to ensure correct segregation of this bacteriophage. Binds to TubZ in the presence of GTP and Mg(2+), and to TubZ-TubR-tubC (tubC is the centromere-like site). The latter complex is reshaped from large bundles to rings by TubY. Modifies TubZ filaments formed in the presence of GDP to make them thinner and more flexible; in GDP and lacking the last 8 residues of TubZ makes rings without TubT-tubC. In Clostridium botulinum C (Clostridium botulinum C bacteriophage), this protein is Regulator protein TubY.